Consider the following 155-residue polypeptide: Probable jacalin-related lectin 26 (155 aa).

2 consecutive transmembrane segments (helical) span residues 26 to 48 (AYLYLSFHLKLLYSVPASYIAMI) and 127 to 149 (VSFVSITIIYFCVCVRSGQVLFL). In terms of domain architecture, Jacalin-type lectin spans 47-155 (MIRAGSVGKK…VLFLMKFKRS (109 aa)).

This sequence belongs to the jacalin lectin family.

It is found in the membrane. The protein is Probable jacalin-related lectin 26 (JAL26) of Arabidopsis thaliana (Mouse-ear cress).